A 132-amino-acid polypeptide reads, in one-letter code: Small ribosomal subunit protein uS8 (132 aa).

This sequence belongs to the universal ribosomal protein uS8 family. As to quaternary structure, part of the 30S ribosomal subunit. Contacts proteins S5 and S12.

Functionally, one of the primary rRNA binding proteins, it binds directly to 16S rRNA central domain where it helps coordinate assembly of the platform of the 30S subunit. The protein is Small ribosomal subunit protein uS8 of Levilactobacillus brevis (strain ATCC 367 / BCRC 12310 / CIP 105137 / JCM 1170 / LMG 11437 / NCIMB 947 / NCTC 947) (Lactobacillus brevis).